We begin with the raw amino-acid sequence, 546 residues long: Probable protein kinase UbiB (546 aa).

One can recognise a Protein kinase domain in the interval 124–502; that stretch reads DFDIQPLASA…HVRQSQSRYL (379 aa). Residues 130–138 and K153 contribute to the ATP site; that span reads LASASIAQV. The Proton acceptor role is filled by D288. Transmembrane regions (helical) follow at residues 501 to 521 and 522 to 542; these read YLLG…VNRP and EWGL…LVGW.

Belongs to the ABC1 family. UbiB subfamily.

The protein localises to the cell inner membrane. Its pathway is cofactor biosynthesis; ubiquinone biosynthesis [regulation]. Functionally, is probably a protein kinase regulator of UbiI activity which is involved in aerobic coenzyme Q (ubiquinone) biosynthesis. The polypeptide is Probable protein kinase UbiB (Salmonella enteritidis PT4 (strain P125109)).